A 38-amino-acid polypeptide reads, in one-letter code: Large ribosomal subunit protein bL36 (38 aa).

Belongs to the bacterial ribosomal protein bL36 family.

The sequence is that of Large ribosomal subunit protein bL36 from Karelsulcia muelleri (strain GWSS) (Sulcia muelleri).